The chain runs to 330 residues: Ketol-acid reductoisomerase (NADP(+)) (330 aa).

The KARI N-terminal Rossmann domain maps to Leu3–Thr184. Residues Tyr26–Gln29, Ser52, and Ser54 contribute to the NADP(+) site. The active site involves His109. Gly135 is a binding site for NADP(+). Positions Ser185–Lys329 constitute a KARI C-terminal knotted domain. Positions 193, 197, 229, and 233 each coordinate Mg(2+). Ser254 serves as a coordination point for substrate.

The protein belongs to the ketol-acid reductoisomerase family. The cofactor is Mg(2+).

It carries out the reaction (2R)-2,3-dihydroxy-3-methylbutanoate + NADP(+) = (2S)-2-acetolactate + NADPH + H(+). The catalysed reaction is (2R,3R)-2,3-dihydroxy-3-methylpentanoate + NADP(+) = (S)-2-ethyl-2-hydroxy-3-oxobutanoate + NADPH + H(+). It functions in the pathway amino-acid biosynthesis; L-isoleucine biosynthesis; L-isoleucine from 2-oxobutanoate: step 2/4. The protein operates within amino-acid biosynthesis; L-valine biosynthesis; L-valine from pyruvate: step 2/4. Involved in the biosynthesis of branched-chain amino acids (BCAA). Catalyzes an alkyl-migration followed by a ketol-acid reduction of (S)-2-acetolactate (S2AL) to yield (R)-2,3-dihydroxy-isovalerate. In the isomerase reaction, S2AL is rearranged via a Mg-dependent methyl migration to produce 3-hydroxy-3-methyl-2-ketobutyrate (HMKB). In the reductase reaction, this 2-ketoacid undergoes a metal-dependent reduction by NADPH to yield (R)-2,3-dihydroxy-isovalerate. This Helicobacter pylori (strain HPAG1) protein is Ketol-acid reductoisomerase (NADP(+)).